Reading from the N-terminus, the 371-residue chain is Chemerin-like receptor 1 (371 aa).

Residues 1–39 (MEYDAYNDSGIYDDEYSDGFGYFVDLEEASPWEAKVAPV) lie on the Extracellular side of the membrane. Residue N7 is glycosylated (N-linked (GlcNAc...) asparagine). A helical membrane pass occupies residues 40–62 (FLVVIYSLVCFLGLLGNGLVIVI). The Cytoplasmic portion of the chain corresponds to 63 to 73 (ATFKMKKTVNT). Residues 74-95 (VWFVNLAVADFLFNIFLPMHIT) form a helical membrane-spanning segment. At 96 to 112 (YAAMDYHWVFGKAMCKI) the chain is on the extracellular side. A disulfide bridge connects residues C110 and C187. Residues 113-133 (SNFLLSHNMYTSVFLLTVISF) form a helical membrane-spanning segment. The Cytoplasmic segment spans residues 134–152 (DRCISVLLPVWSQNHRSIR). A helical transmembrane segment spans residues 153-174 (LAYMTCSAVWVLAFFLSSPSLV). Topologically, residues 175-222 (FRDTANIHGKITCFNNFSLAAPESSPHPAHSQVVSTGYSRHVAVTVTR) are extracellular. An N-linked (GlcNAc...) asparagine glycan is attached at N190. Residues 223–243 (FLCGFLIPVFIITACYLTIVF) traverse the membrane as a helical segment. Over 244–259 (KLQRNRLAKNKKPFKI) the chain is Cytoplasmic. The helical transmembrane segment at 260-280 (IITIIITFFLCWCPYHTLYLL) threads the bilayer. Residues 281–298 (ELHHTAVPSSVFSLGLPL) lie on the Extracellular side of the membrane. A helical membrane pass occupies residues 299–318 (ATAVAIANSCMNPILYVFMG). At 319–371 (HDFRKFKVALFSRLANALSEDTGPSSYPSHRSFTKMSSLNEKASVNEKETSTL) the chain is on the cytoplasmic side. S337 is modified (phosphoserine). T340 is subject to Phosphothreonine. A phosphoserine mark is found at S347, S350, and S356. T370 bears the Phosphothreonine mark.

The protein belongs to the chemokine-like receptor (CMKLR) family. In terms of tissue distribution, expressed in the differentiated adipocytes (at protein level). Ubiquitous. Highly expressed in adipose tissue and immature plasmacytoid dendritic cells (DCs) and at lower levels in myeloid DCs, macrophages, and NK cells. Expressed on macrophages isolated from different tissues, including peritoneal cavities, pleural cavities and spleen.

The protein resides in the cell membrane. In terms of biological role, receptor for the chemoattractant adipokine chemerin/RARRES2 and for the omega-3 fatty acid derived molecule resolvin E1. Interaction with RARRES2 initiates activation of G proteins G(i)/G(o) and beta-arrestin pathways inducing cellular responses via second messenger pathways such as intracellular calcium mobilization, phosphorylation of MAP kinases MAPK1/MAPK3 (ERK1/2), TYRO3, MAPK14/P38MAPK and PI3K leading to multifunctional effects, like, reduction of immune responses, enhancing of adipogenesis and angionesis. Resolvin E1 down-regulates cytokine production in macrophages by reducing the activation of MAPK1/3 (ERK1/2) and NF-kappa-B. Positively regulates adipogenesis and adipocyte metabolism. This is Chemerin-like receptor 1 (Cmklr1) from Mus musculus (Mouse).